The sequence spans 233 residues: Orotidine 5'-phosphate decarboxylase (233 aa).

Substrate-binding positions include Asp11, Lys34, Asp61 to Thr70, Thr117, Arg179, Gln188, Gly208, and Arg209. The active-site Proton donor is the Lys63.

Belongs to the OMP decarboxylase family. Type 1 subfamily. In terms of assembly, homodimer.

It catalyses the reaction orotidine 5'-phosphate + H(+) = UMP + CO2. Its pathway is pyrimidine metabolism; UMP biosynthesis via de novo pathway; UMP from orotate: step 2/2. Catalyzes the decarboxylation of orotidine 5'-monophosphate (OMP) to uridine 5'-monophosphate (UMP). The sequence is that of Orotidine 5'-phosphate decarboxylase from Streptococcus pneumoniae serotype 4 (strain ATCC BAA-334 / TIGR4).